A 361-amino-acid chain; its full sequence is Ribosomal RNA large subunit methyltransferase M (361 aa).

S-adenosyl-L-methionine contacts are provided by residues serine 186, 219-222 (CPGG), aspartate 238, aspartate 258, and aspartate 275. The Proton acceptor role is filled by lysine 304.

Belongs to the class I-like SAM-binding methyltransferase superfamily. RNA methyltransferase RlmE family. RlmM subfamily. Monomer.

Its subcellular location is the cytoplasm. The catalysed reaction is cytidine(2498) in 23S rRNA + S-adenosyl-L-methionine = 2'-O-methylcytidine(2498) in 23S rRNA + S-adenosyl-L-homocysteine + H(+). In terms of biological role, catalyzes the 2'-O-methylation at nucleotide C2498 in 23S rRNA. This chain is Ribosomal RNA large subunit methyltransferase M, found in Pseudoalteromonas translucida (strain TAC 125).